The sequence spans 330 residues: Phenylalanine--tRNA ligase alpha subunit (330 aa).

E257 contacts Mg(2+).

It belongs to the class-II aminoacyl-tRNA synthetase family. Phe-tRNA synthetase alpha subunit type 1 subfamily. Tetramer of two alpha and two beta subunits. Mg(2+) serves as cofactor.

Its subcellular location is the cytoplasm. The enzyme catalyses tRNA(Phe) + L-phenylalanine + ATP = L-phenylalanyl-tRNA(Phe) + AMP + diphosphate + H(+). This Acaryochloris marina (strain MBIC 11017) protein is Phenylalanine--tRNA ligase alpha subunit.